The chain runs to 87 residues: RNA-binding protein Hfq (87 aa).

A Sm domain is found at 9-68 (DPFLNALRRERIPVSIYLVNGIKLQGQIESFDQFVILLKNTVNQMVYKHAISTVVPARPV). The interval 65–87 (ARPVSHHSGDRPQGDRPQEKSED) is disordered. A compositionally biased stretch (basic and acidic residues) spans 71–87 (HSGDRPQGDRPQEKSED).

The protein belongs to the Hfq family. Homohexamer.

In terms of biological role, RNA chaperone that binds small regulatory RNA (sRNAs) and mRNAs to facilitate mRNA translational regulation in response to envelope stress, environmental stress and changes in metabolite concentrations. Also binds with high specificity to tRNAs. This is RNA-binding protein Hfq from Vibrio parahaemolyticus serotype O3:K6 (strain RIMD 2210633).